A 160-amino-acid polypeptide reads, in one-letter code: Cytochrome b6-f complex subunit 4 (160 aa).

3 consecutive transmembrane segments (helical) span residues 36–56 (LLYI…GLAV), 95–115 (LLGV…PFLE), and 131–151 (TVFL…ALPI).

It belongs to the cytochrome b family. PetD subfamily. The 4 large subunits of the cytochrome b6-f complex are cytochrome b6, subunit IV (17 kDa polypeptide, petD), cytochrome f and the Rieske protein, while the 4 small subunits are petG, petL, petM and petN. The complex functions as a dimer.

It is found in the plastid. It localises to the chloroplast thylakoid membrane. Component of the cytochrome b6-f complex, which mediates electron transfer between photosystem II (PSII) and photosystem I (PSI), cyclic electron flow around PSI, and state transitions. The sequence is that of Cytochrome b6-f complex subunit 4 from Chara vulgaris (Common stonewort).